We begin with the raw amino-acid sequence, 350 residues long: Protein-glutamate methylesterase/protein-glutamine glutaminase (350 aa).

A Response regulatory domain is found at 5 to 122 (KVLCVDDSAL…RDGLIEYSEV (118 aa)). Asp56 is subject to 4-aspartylphosphate. Residues 152-346 (PFASSEKLVI…ERILTRLGDR (195 aa)) form the CheB-type methylesterase domain. Active-site residues include Ser165, His191, and Asp288.

This sequence belongs to the CheB family. Post-translationally, phosphorylated by CheA. Phosphorylation of the N-terminal regulatory domain activates the methylesterase activity.

Its subcellular location is the cytoplasm. The catalysed reaction is [protein]-L-glutamate 5-O-methyl ester + H2O = L-glutamyl-[protein] + methanol + H(+). It catalyses the reaction L-glutaminyl-[protein] + H2O = L-glutamyl-[protein] + NH4(+). In terms of biological role, involved in chemotaxis. Part of a chemotaxis signal transduction system that modulates chemotaxis in response to various stimuli. Catalyzes the demethylation of specific methylglutamate residues introduced into the chemoreceptors (methyl-accepting chemotaxis proteins or MCP) by CheR. Also mediates the irreversible deamidation of specific glutamine residues to glutamic acid. This Bordetella pertussis (strain Tohama I / ATCC BAA-589 / NCTC 13251) protein is Protein-glutamate methylesterase/protein-glutamine glutaminase.